Consider the following 354-residue polypeptide: N-acetyl-gamma-glutamyl-phosphate reductase (354 aa).

Cys-156 is an active-site residue.

This sequence belongs to the NAGSA dehydrogenase family. Type 1 subfamily.

The protein resides in the cytoplasm. The enzyme catalyses N-acetyl-L-glutamate 5-semialdehyde + phosphate + NADP(+) = N-acetyl-L-glutamyl 5-phosphate + NADPH + H(+). Its pathway is amino-acid biosynthesis; L-arginine biosynthesis; N(2)-acetyl-L-ornithine from L-glutamate: step 3/4. Catalyzes the NADPH-dependent reduction of N-acetyl-5-glutamyl phosphate to yield N-acetyl-L-glutamate 5-semialdehyde. In Bordetella pertussis (strain Tohama I / ATCC BAA-589 / NCTC 13251), this protein is N-acetyl-gamma-glutamyl-phosphate reductase.